A 70-amino-acid polypeptide reads, in one-letter code: Movement protein TGBp3 (70 aa).

Residues 1-4 (MEAG) lie on the Lumenal side of the membrane. A helical membrane pass occupies residues 5 to 27 (AYLNAIIFVLVATIIAVISRGLT). Residues 28-70 (RTEPCTIRITGESITVHACHIDSETIKALANLKPLSLERLSFQ) lie on the Cytoplasmic side of the membrane.

This sequence belongs to the Tymovirales TGBp3 protein family.

Its subcellular location is the host endoplasmic reticulum membrane. Functionally, plays a role in viral cell-to-cell propagation, by facilitating genome transport to neighboring plant cells through plasmosdesmata. May induce the formation of granular vesicles derived from the Endoplasmic reticulum, which align on actin filaments. The protein is Movement protein TGBp3 of Potato virus X (strain CP) (PVX).